The sequence spans 477 residues: Transmembrane and coiled-coil domain protein 3 (477 aa).

At Ser46 the chain carries Phosphoserine. The stretch at 112-153 forms a coiled coil; sequence KQVFEKKNQKSAHSIAQLQKKLEQYHRKLREIEQNGASRSSK. Disordered regions lie at residues 168 to 188 and 249 to 277; these read KDAHVKSRTAPHCMESSKSGM and PKYGSDDECSSGTSGSADSNGNQSFGAGG. Ser253 is modified (phosphoserine). Residues 258–273 show a composition bias toward polar residues; it reads SSGTSGSADSNGNQSF. Residues 282-398 adopt a coiled-coil conformation; sequence DSQGKLAVIL…KLELHQQEQQ (117 aa). Transmembrane regions (helical) follow at residues 417 to 437 and 450 to 470; these read VILAFMTVILVCVSTIAKFVS and FFAVTLLAIFCKNWDHILCAI.

The protein belongs to the TEX28 family. May form homodimers and heterodimers with TMCC2 or TMCC3 via the coiled-coil domains. Interacts with ribosomal proteins RPL4 and RPS6. Widely expressed, with highest levels in brain, spinal cord and testis.

Its subcellular location is the endoplasmic reticulum membrane. The polypeptide is Transmembrane and coiled-coil domain protein 3 (Homo sapiens (Human)).